We begin with the raw amino-acid sequence, 580 residues long: mRNA cap guanine-N(7) methyltransferase (580 aa).

2 stretches are compositionally biased toward polar residues: residues methionine 1–isoleucine 17 and glutamate 25–leucine 53. Residues methionine 1–leucine 222 are disordered. Over residues lysine 54–proline 67 the composition is skewed to basic and acidic residues. Polar residues predominate over residues aspartate 69–serine 90. A compositionally biased stretch (basic and acidic residues) spans arginine 102–aspartate 154. Over residues glutamate 191 to valine 214 the composition is skewed to acidic residues. The mRNA cap 0 methyltransferase domain maps to serine 271 to leucine 579. Position 280-281 (asparagine 280–asparagine 281) interacts with mRNA. Residues lysine 284, cysteine 308, aspartate 330, aspartate 376, glutamine 406, and tyrosine 411 each coordinate S-adenosyl-L-methionine.

Belongs to the class I-like SAM-binding methyltransferase superfamily. mRNA cap 0 methyltransferase family.

It localises to the nucleus. It carries out the reaction a 5'-end (5'-triphosphoguanosine)-ribonucleoside in mRNA + S-adenosyl-L-methionine = a 5'-end (N(7)-methyl 5'-triphosphoguanosine)-ribonucleoside in mRNA + S-adenosyl-L-homocysteine. In terms of biological role, responsible for methylating the 5'-cap structure of mRNAs. The protein is mRNA cap guanine-N(7) methyltransferase (ABD1) of Meyerozyma guilliermondii (strain ATCC 6260 / CBS 566 / DSM 6381 / JCM 1539 / NBRC 10279 / NRRL Y-324) (Yeast).